The chain runs to 410 residues: MADKVLKGKRKQFINSVGMGTVNGLLDELFEKNVLNQEEMERVKCENATVMDKARALIDSVLRKGPRACQIFICHICEEDTHLAETLGLSSSPQSGNSQNTTDSEVAFPPLPASVNNMPGPAEPEESVDALKLCPHENFVKLCKQRAEEIYPIKERKDRTRLALIICNTTFDHLSLRKGADLDVAGMRRLLTDLGYSVHIKEELTAKDMESELRAFAARPEHKSSDSTFLVFMSHGILSGICGTKYSAEGDPDVLAYDTIFQIFNNRNCLSLKDKPKVIIVQACRGENLGELLISDSPAAPMDSTSQMGSSLSQVGDNLEDDAIYKVHVEKDFIAFCSSTPHHVSWRDVNKGSLFITQLITCFQKYSWCFHLEEVFRKVQQSFEKPNVRAQMPTIERLSMTRYFYLFPGH.

One can recognise a CARD domain in the interval 1–91; it reads MADKVLKGKR…HLAETLGLSS (91 aa). A propeptide spanning residues 1 to 119 is cleaved from the precursor; sequence MADKVLKGKR…PLPASVNNMP (119 aa). Residues 88–104 are compositionally biased toward polar residues; sequence GLSSSPQSGNSQNTTDS. The interval 88–125 is disordered; the sequence is GLSSSPQSGNSQNTTDSEVAFPPLPASVNNMPGPAEPE. Catalysis depends on residues His235 and Cys284. The propeptide occupies 297–322; the sequence is SPAAPMDSTSQMGSSLSQVGDNLEDD.

This sequence belongs to the peptidase C14A family. As to quaternary structure, heterotetramer that consists of two anti-parallel arranged heterodimers, each one formed by a 20 kDa (Caspase-1 subunit p20) and a 10 kDa (Caspase-1 subunit p10) subunit. May be a component of the inflammasome, a protein complex which also includes PYCARD, CARD8 and NLRP2 and whose function would be the activation of pro-inflammatory caspases. Component of the AIM2 PANoptosome complex, a multiprotein complex that drives inflammatory cell death (PANoptosis). Both the p10 and p20 subunits interact with MEFV. Interacts with CARD17P/INCA and CARD18. Interacts with SERPINB1; this interaction regulates CASP1 activity. In terms of assembly, heterotetramer that consists of two anti-parallel arranged heterodimers, each one formed by a 20 kDa (Caspase-1 subunit p20) and a 10 kDa (Caspase-1 subunit p10) subunit. In terms of processing, the two subunits are derived from the precursor sequence by an autocatalytic mechanism. Post-translationally, ubiquitinated via 'Lys-11'-linked polyubiquitination. Deubiquitinated by USP8.

It localises to the cytoplasm. It is found in the cell membrane. It carries out the reaction Strict requirement for an Asp residue at position P1 and has a preferred cleavage sequence of Tyr-Val-Ala-Asp-|-.. Thiol protease involved in a variety of inflammatory processes by proteolytically cleaving other proteins, such as the precursors of the inflammatory cytokines interleukin-1 beta (IL1B) and interleukin 18 (IL18) as well as the pyroptosis inducer Gasdermin-D (GSDMD), into active mature peptides. Plays a key role in cell immunity as an inflammatory response initiator: once activated through formation of an inflammasome complex, it initiates a pro-inflammatory response through the cleavage of the two inflammatory cytokines IL1B and IL18, releasing the mature cytokines which are involved in a variety of inflammatory processes. Cleaves a tetrapeptide after an Asp residue at position P1. Also initiates pyroptosis, a programmed lytic cell death pathway, through cleavage of GSDMD. In contrast to cleavage of interleukin IL1B, recognition and cleavage of GSDMD is not strictly dependent on the consensus cleavage site but depends on an exosite interface on CASP1 that recognizes and binds the Gasdermin-D, C-terminal (GSDMD-CT) part. Cleaves and activates CASP7 in response to bacterial infection, promoting plasma membrane repair. Upon inflammasome activation, during DNA virus infection but not RNA virus challenge, controls antiviral immunity through the cleavage of CGAS, rendering it inactive. In apoptotic cells, cleaves SPHK2 which is released from cells and remains enzymatically active extracellularly. In Felis catus (Cat), this protein is Caspase-1 (CASP1).